The chain runs to 801 residues: Cation/H(+) antiporter 7 (801 aa).

A run of 13 helical transmembrane segments spans residues 58 to 78, 83 to 103, 128 to 148, 154 to 174, 192 to 212, 223 to 243, 254 to 274, 287 to 307, 312 to 332, 340 to 360, 377 to 397, 407 to 427, and 438 to 458; these read PNLELIILSVFFFWQFFEILF, IPIPKMPSMMLGCVVINLFSY, GAFGFVMYWFLKGVSIDVGML, RAALIGFNTLVIPYISGYILM, EIILLQSLSSFAGVNGLLTDL, VQSCAAVTDLVIFIMVSGTVL, IVIVLVIGFLVYIVWPVMLWI, VYIYLVMATAYFVYMFWLNFF, YGWFIIGLATPAGPPLGSALI, VGVLLPLFGSLSMEQLDISWL, AISVILIVTVVKFVVTAITAF, IVLAMVLSNRSIFELGYLGYI, and FTIAALSVLVSSLLTPIAIEF.

The protein belongs to the monovalent cation:proton antiporter 2 (CPA2) transporter (TC 2.A.37) family. CHX (TC 2.A.37.4) subfamily. In terms of tissue distribution, expressed in pollen.

The protein localises to the membrane. May operate as a cation/H(+) antiporter. The protein is Cation/H(+) antiporter 7 (CHX7) of Arabidopsis thaliana (Mouse-ear cress).